The primary structure comprises 224 residues: LexA repressor (224 aa).

The H-T-H motif DNA-binding region spans arginine 29 to lysine 49. Residues serine 142 and lysine 179 each act as for autocatalytic cleavage activity in the active site.

The protein belongs to the peptidase S24 family. In terms of assembly, homodimer.

It catalyses the reaction Hydrolysis of Ala-|-Gly bond in repressor LexA.. Its function is as follows. Represses a number of genes involved in the response to DNA damage (SOS response), including recA and lexA. In the presence of single-stranded DNA, RecA interacts with LexA causing an autocatalytic cleavage which disrupts the DNA-binding part of LexA, leading to derepression of the SOS regulon and eventually DNA repair. This is LexA repressor from Bordetella petrii (strain ATCC BAA-461 / DSM 12804 / CCUG 43448).